A 431-amino-acid chain; its full sequence is NADH-quinone oxidoreductase subunit D 2 (431 aa).

A disordered region spans residues Met1–Gly37.

This sequence belongs to the complex I 49 kDa subunit family. In terms of assembly, NDH-1 is composed of 14 different subunits. Subunits NuoB, C, D, E, F, and G constitute the peripheral sector of the complex.

It is found in the cell inner membrane. It catalyses the reaction a quinone + NADH + 5 H(+)(in) = a quinol + NAD(+) + 4 H(+)(out). Functionally, NDH-1 shuttles electrons from NADH, via FMN and iron-sulfur (Fe-S) centers, to quinones in the respiratory chain. The immediate electron acceptor for the enzyme in this species is believed to be ubiquinone. Couples the redox reaction to proton translocation (for every two electrons transferred, four hydrogen ions are translocated across the cytoplasmic membrane), and thus conserves the redox energy in a proton gradient. This chain is NADH-quinone oxidoreductase subunit D 2, found in Anaeromyxobacter sp. (strain K).